A 906-amino-acid polypeptide reads, in one-letter code: Envelope glycoprotein B (906 aa).

The first 31 residues, 1-31, serve as a signal peptide directing secretion; it reads MESRIWCLVVCVNLCIVCLGAAVSSSSTSHA. Low complexity predominate over residues 29–46; sequence SHATSSTHNGSHTSRTTS. Positions 29-51 are disordered; it reads SHATSSTHNGSHTSRTTSAQTRS. Over 32–750 the chain is Virion surface; it reads TSSTHNGSHT…EGVATFLKNP (719 aa). N-linked (GlcNAc...) asparagine; by host glycosylation is found at N37, N68, N73, and N85. Cystine bridges form between C94-C550, C111-C506, C185-C250, C246-C250, and C344-C391. The segment at 152-158 is involved in fusion and/or binding to host membrane; that stretch reads SYAYIYT. N208 carries an N-linked (GlcNAc...) asparagine; by host glycan. The involved in fusion and/or binding to host membrane stretch occupies residues 237-244; it reads GSTWLYRE. N281, N286, N302, N341, N383, N405, N409, N417, N447, N452, N464, N465, N554, and N585 each carry an N-linked (GlcNAc...) asparagine; by host glycan. C573 and C610 are oxidised to a cystine. 2 hydrophobic membrane proximal region regions span residues 696–748 and 727–747; these read VEDK…TFLK and VAIG…ATFL. The chain crosses the membrane as a helical span at residues 751-771; that stretch reads FGAFTIILVAIAVVIITYLIY. The Intravirion portion of the chain corresponds to 772-906; that stretch reads TRQRRLCTQP…LKDSDEEENV (135 aa). Polar residues-rich tracts occupy residues 797-809 and 859-876; these read VTSG…SLQA and RAQQ…GTQD. Disordered regions lie at residues 797–837 and 856–906; these read VTSG…TAAP and AEQR…EENV. A compositionally biased stretch (basic and acidic residues) spans 877–886; that stretch reads KGQKPNLLDR. Residues 894–897 carry the Internalization motif motif; that stretch reads YRHL.

The protein belongs to the herpesviridae glycoprotein B family. As to quaternary structure, homotrimer; disulfide-linked. Binds to heparan sulfate proteoglycans. Interacts with gH/gL heterodimer. Interacts with host TLR1 and TLR2. Interacts with host C-type lectin CD209/DC-SIGN. Interacts with host ITGB1, EGFR, and PDGFRA. A proteolytic cleavage by host furin generates two subunits that remain linked by disulfide bonds.

The protein resides in the virion membrane. The protein localises to the host cell membrane. It is found in the host endosome membrane. Its subcellular location is the host Golgi apparatus membrane. Its function is as follows. Envelope glycoprotein that plays a role in host cell entry, cell to-cell virus transmission, and fusion of infected cells. May be involved in the initial attachment via binding to heparan sulfate together with the gM/gN complex that binds heparin with higher affinity. Interacts with host integrin ITGB1, PDGFRA and EGFR that likely serve as postattachment entry receptors. Also participates in the fusion of viral and cellular membranes leading to virus entry into the host cell. Membrane fusion is mediated by the fusion machinery composed at least of gB and the heterodimer gH/gL. This chain is Envelope glycoprotein B, found in Human cytomegalovirus (strain AD169) (HHV-5).